Consider the following 365-residue polypeptide: MNENHYLLLTPGPLTTTKSVKEVMLYDWCTWDVEYNTMVQEVRAKLVSLATKEEEKYTTVLMQGSGTFSVEAVIGSVIPANGKLLVCTNGAYGKRIVQMAEMLQIDVVVSQTEEWEPTNIVEVEKLLQEDKEITHIAVVHCETTTGIINPIVDVCKLGKQYGKVTIVDAMSSFGGIEIDIADLQIDFLISSANKCIQGVPGFGFVIAKRDELLKCKGKGRSLSLDLYDQWETMEKQNGKWRFTSPTHVVHAFYQALLELEKEGGVRARYNRYYNNQKLLVNRMGEIGFKPLVDEKYQSPIITSFIYPKEGFEFQQLYNELKRYGFVIYPGKISKVDTFRIGNIGDVHEEDINRLVDSIAKGAVIG.

At K194 the chain carries N6-(pyridoxal phosphate)lysine.

This sequence belongs to the class-V pyridoxal-phosphate-dependent aminotransferase family. PhnW subfamily. As to quaternary structure, homodimer. It depends on pyridoxal 5'-phosphate as a cofactor.

The catalysed reaction is (2-aminoethyl)phosphonate + pyruvate = phosphonoacetaldehyde + L-alanine. Functionally, involved in phosphonate degradation. This Bacillus cereus (strain G9842) protein is 2-aminoethylphosphonate--pyruvate transaminase.